We begin with the raw amino-acid sequence, 1857 residues long: Phosphatidylinositol 3-kinase 2 (1857 aa).

Composition is skewed to low complexity over residues 1 to 32 (MKMS…SNGS) and 42 to 55 (NLSV…SNNS). 5 disordered regions span residues 1–61 (MKMS…KSST), 145–313 (TPLN…TNRV), 348–468 (SSSK…NSIR), 481–512 (ISSN…GERV), and 530–573 (ESDI…GPNV). Residues 145–155 (TPLNRSRSGSI) are compositionally biased toward polar residues. Over residues 162 to 269 (NNLTSSSSSS…NNNNNNNSNS (108 aa)) the composition is skewed to low complexity. The span at 270 to 281 (GGSSRMITSKSQ) shows a compositional bias: polar residues. Low complexity-rich tracts occupy residues 288 to 311 (TSNT…TPTN) and 352 to 464 (LLIP…QPSN). A compositionally biased stretch (low complexity) spans 533–560 (ISSSPRSIGSPNSIRASISSQLPPSLSS). A compositionally biased stretch (gly residues) spans 561-570 (IGGGGGGGSG). The 114-residue stretch at 821-934 (PNKITIMVLL…NQTVELSLTN (114 aa)) folds into the PI3K-RBD domain. The interval 996–1078 (KETNKENKDS…SGSGNGSEQP (83 aa)) is disordered. Basic and acidic residues predominate over residues 997-1011 (ETNKENKDSNKENKD). Positions 1012 to 1056 (SSSNNNNNNNNNNNNNNNNNNNNNNNNNNNGNNNGNNSNNNSNSN) are enriched in low complexity. The region spanning 1099–1271 (VKRLFRVNIA…QPIILLVEFE (173 aa)) is the C2 PI3K-type domain. A PIK helical domain is found at 1326 to 1503 (PVGLKKLDLD…GLLLEGYLRS (178 aa)). Residues 1568 to 1845 (IIDKCRYMDS…NISVALNTKT (278 aa)) enclose the PI3K/PI4K catalytic domain. A G-loop region spans residues 1574–1580 (YMDSKKL). Residues 1711–1719 (GIGDRHSDN) are catalytic loop. The activation loop stretch occupies residues 1730–1756 (HIDFGHFLGNYKKKYGFKRERAPFIFT).

It belongs to the PI3/PI4-kinase family.

The catalysed reaction is a 1,2-diacyl-sn-glycero-3-phospho-(1D-myo-inositol) + ATP = a 1,2-diacyl-sn-glycero-3-phospho-(1D-myo-inositol-3-phosphate) + ADP + H(+). The sequence is that of Phosphatidylinositol 3-kinase 2 (pikB) from Dictyostelium discoideum (Social amoeba).